Reading from the N-terminus, the 252-residue chain is tRNA pseudouridine synthase A (252 aa).

Aspartate 52 acts as the Nucleophile in catalysis. Residue tyrosine 111 participates in substrate binding.

It belongs to the tRNA pseudouridine synthase TruA family. In terms of assembly, homodimer.

The enzyme catalyses uridine(38/39/40) in tRNA = pseudouridine(38/39/40) in tRNA. Formation of pseudouridine at positions 38, 39 and 40 in the anticodon stem and loop of transfer RNAs. The chain is tRNA pseudouridine synthase A from Methylorubrum populi (strain ATCC BAA-705 / NCIMB 13946 / BJ001) (Methylobacterium populi).